Here is a 505-residue protein sequence, read N- to C-terminus: 2,3-bisphosphoglycerate-independent phosphoglycerate mutase (505 aa).

Mn(2+) is bound by residues Asp-13 and Ser-63. The Phosphoserine intermediate role is filled by Ser-63. Substrate is bound by residues His-124, 153-154 (RD), Arg-183, Arg-189, 254-257 (RADR), and Lys-330. Residues Asp-396, His-400, Asp-437, His-438, and His-456 each coordinate Mn(2+).

Belongs to the BPG-independent phosphoglycerate mutase family. In terms of assembly, monomer. Mn(2+) serves as cofactor.

It carries out the reaction (2R)-2-phosphoglycerate = (2R)-3-phosphoglycerate. It participates in carbohydrate degradation; glycolysis; pyruvate from D-glyceraldehyde 3-phosphate: step 3/5. Its function is as follows. Catalyzes the interconversion of 2-phosphoglycerate and 3-phosphoglycerate. In Roseobacter denitrificans (strain ATCC 33942 / OCh 114) (Erythrobacter sp. (strain OCh 114)), this protein is 2,3-bisphosphoglycerate-independent phosphoglycerate mutase.